A 270-amino-acid polypeptide reads, in one-letter code: 5'-AMP-activated protein kinase subunit beta-1 (270 aa).

The tract at residues 1–44 (MGNTSSERAALERQAGHKTPRRDSSGGAKDGDRPKILMDSPEDA) is disordered. Residue G2 is the site of N-myristoyl glycine attachment. Position 4 is a phosphothreonine (T4). A phosphoserine mark is found at S5 and S6. Residues 9–36 (AALERQAGHKTPRRDSSGGAKDGDRPKI) show a composition bias toward basic and acidic residues. Position 19 is a phosphothreonine (T19). Phosphoserine; by autocatalysis is present on residues S24 and S25. 3 positions are modified to phosphoserine: S40, S96, and S101. The segment at 68-163 (EANDKAPAQA…QVKKTDFEVF (96 aa)) is glycogen-binding domain. S108 is modified (phosphoserine; by autocatalysis). T148 is subject to Phosphothreonine. S182 carries the phosphoserine modification. K201 is subject to N6-succinyllysine.

This sequence belongs to the 5'-AMP-activated protein kinase beta subunit family. AMPK is a heterotrimer of an alpha catalytic subunit (PRKAA1 or PRKAA2), a beta (PRKAB1 or PRKAB2) and a gamma non-catalytic subunits (PRKAG1, PRKAG2 or PRKAG3). Interacts with FNIP1 and FNIP2. Phosphorylated when associated with the catalytic subunit (PRKAA1 or PRKAA2). Phosphorylated by ULK1; leading to negatively regulate AMPK activity and suggesting the existence of a regulatory feedback loop between ULK1 and AMPK.

In terms of biological role, non-catalytic subunit of AMP-activated protein kinase (AMPK), an energy sensor protein kinase that plays a key role in regulating cellular energy metabolism. In response to reduction of intracellular ATP levels, AMPK activates energy-producing pathways and inhibits energy-consuming processes: inhibits protein, carbohydrate and lipid biosynthesis, as well as cell growth and proliferation. AMPK acts via direct phosphorylation of metabolic enzymes, and by longer-term effects via phosphorylation of transcription regulators. Also acts as a regulator of cellular polarity by remodeling the actin cytoskeleton; probably by indirectly activating myosin. Beta non-catalytic subunit acts as a scaffold on which the AMPK complex assembles, via its C-terminus that bridges alpha (PRKAA1 or PRKAA2) and gamma subunits (PRKAG1, PRKAG2 or PRKAG3). The sequence is that of 5'-AMP-activated protein kinase subunit beta-1 (Prkab1) from Mus musculus (Mouse).